We begin with the raw amino-acid sequence, 461 residues long: UDP-N-acetylmuramoylalanine--D-glutamate ligase (461 aa).

Gly115–Thr121 contributes to the ATP binding site.

Belongs to the MurCDEF family.

The protein resides in the cytoplasm. The enzyme catalyses UDP-N-acetyl-alpha-D-muramoyl-L-alanine + D-glutamate + ATP = UDP-N-acetyl-alpha-D-muramoyl-L-alanyl-D-glutamate + ADP + phosphate + H(+). It participates in cell wall biogenesis; peptidoglycan biosynthesis. Cell wall formation. Catalyzes the addition of glutamate to the nucleotide precursor UDP-N-acetylmuramoyl-L-alanine (UMA). The sequence is that of UDP-N-acetylmuramoylalanine--D-glutamate ligase from Acidobacterium capsulatum (strain ATCC 51196 / DSM 11244 / BCRC 80197 / JCM 7670 / NBRC 15755 / NCIMB 13165 / 161).